Here is a 313-residue protein sequence, read N- to C-terminus: Porphobilinogen deaminase (313 aa).

C242 is subject to S-(dipyrrolylmethanemethyl)cysteine.

Belongs to the HMBS family. In terms of assembly, monomer. It depends on dipyrromethane as a cofactor.

It catalyses the reaction 4 porphobilinogen + H2O = hydroxymethylbilane + 4 NH4(+). The protein operates within porphyrin-containing compound metabolism; protoporphyrin-IX biosynthesis; coproporphyrinogen-III from 5-aminolevulinate: step 2/4. Its function is as follows. Tetrapolymerization of the monopyrrole PBG into the hydroxymethylbilane pre-uroporphyrinogen in several discrete steps. This chain is Porphobilinogen deaminase, found in Pseudomonas putida (strain ATCC 700007 / DSM 6899 / JCM 31910 / BCRC 17059 / LMG 24140 / F1).